The primary structure comprises 157 residues: 2-C-methyl-D-erythritol 2,4-cyclodiphosphate synthase (157 aa).

A divalent metal cation-binding residues include Asp-8 and His-10. Residues 8–10 (DVH) and 34–35 (HS) each bind 4-CDP-2-C-methyl-D-erythritol 2-phosphate. His-42 is a binding site for a divalent metal cation. 4-CDP-2-C-methyl-D-erythritol 2-phosphate contacts are provided by residues 56 to 58 (DIG), 61 to 65 (FPDTD), 100 to 106 (AQAPKMA), 132 to 135 (TTTE), Phe-139, and Arg-142.

The protein belongs to the IspF family. In terms of assembly, homotrimer. A divalent metal cation is required as a cofactor.

It catalyses the reaction 4-CDP-2-C-methyl-D-erythritol 2-phosphate = 2-C-methyl-D-erythritol 2,4-cyclic diphosphate + CMP. It functions in the pathway isoprenoid biosynthesis; isopentenyl diphosphate biosynthesis via DXP pathway; isopentenyl diphosphate from 1-deoxy-D-xylulose 5-phosphate: step 4/6. Involved in the biosynthesis of isopentenyl diphosphate (IPP) and dimethylallyl diphosphate (DMAPP), two major building blocks of isoprenoid compounds. Catalyzes the conversion of 4-diphosphocytidyl-2-C-methyl-D-erythritol 2-phosphate (CDP-ME2P) to 2-C-methyl-D-erythritol 2,4-cyclodiphosphate (ME-CPP) with a corresponding release of cytidine 5-monophosphate (CMP). This Pseudomonas aeruginosa (strain UCBPP-PA14) protein is 2-C-methyl-D-erythritol 2,4-cyclodiphosphate synthase.